The following is a 349-amino-acid chain: Cobalt-precorrin-5B C(1)-methyltransferase (349 aa).

This sequence belongs to the CbiD family.

It catalyses the reaction Co-precorrin-5B + S-adenosyl-L-methionine = Co-precorrin-6A + S-adenosyl-L-homocysteine. It functions in the pathway cofactor biosynthesis; adenosylcobalamin biosynthesis; cob(II)yrinate a,c-diamide from sirohydrochlorin (anaerobic route): step 6/10. Functionally, catalyzes the methylation of C-1 in cobalt-precorrin-5B to form cobalt-precorrin-6A. The sequence is that of Cobalt-precorrin-5B C(1)-methyltransferase from Saccharolobus islandicus (strain L.S.2.15 / Lassen #1) (Sulfolobus islandicus).